A 240-amino-acid chain; its full sequence is Pyridoxine 5'-phosphate synthase (240 aa).

Asn-7 lines the 3-amino-2-oxopropyl phosphate pocket. A 1-deoxy-D-xylulose 5-phosphate-binding site is contributed by 9 to 10 (DH). Arg-18 contacts 3-amino-2-oxopropyl phosphate. His-43 (proton acceptor) is an active-site residue. Residues Arg-45 and His-50 each coordinate 1-deoxy-D-xylulose 5-phosphate. The active-site Proton acceptor is Glu-70. Position 100 (Thr-100) interacts with 1-deoxy-D-xylulose 5-phosphate. His-191 functions as the Proton donor in the catalytic mechanism. 3-amino-2-oxopropyl phosphate is bound by residues Gly-192 and 213 to 214 (GH).

This sequence belongs to the PNP synthase family. In terms of assembly, homooctamer; tetramer of dimers.

It is found in the cytoplasm. The catalysed reaction is 3-amino-2-oxopropyl phosphate + 1-deoxy-D-xylulose 5-phosphate = pyridoxine 5'-phosphate + phosphate + 2 H2O + H(+). The protein operates within cofactor biosynthesis; pyridoxine 5'-phosphate biosynthesis; pyridoxine 5'-phosphate from D-erythrose 4-phosphate: step 5/5. Functionally, catalyzes the complicated ring closure reaction between the two acyclic compounds 1-deoxy-D-xylulose-5-phosphate (DXP) and 3-amino-2-oxopropyl phosphate (1-amino-acetone-3-phosphate or AAP) to form pyridoxine 5'-phosphate (PNP) and inorganic phosphate. The sequence is that of Pyridoxine 5'-phosphate synthase from Acaryochloris marina (strain MBIC 11017).